Here is a 177-residue protein sequence, read N- to C-terminus: Nucleoside triphosphate/diphosphate phosphatase (177 aa).

Catalysis depends on Arg23, which acts as the Proton donor. Asn87, Asp103, Asp105, Asp107, Asp120, and Glu123 together coordinate Mg(2+).

This sequence belongs to the Ntdp family. Mg(2+) is required as a cofactor.

The catalysed reaction is a ribonucleoside 5'-triphosphate + H2O = a ribonucleoside 5'-diphosphate + phosphate + H(+). It catalyses the reaction a ribonucleoside 5'-diphosphate + H2O = a ribonucleoside 5'-phosphate + phosphate + H(+). Its function is as follows. Has nucleoside phosphatase activity towards nucleoside triphosphates and nucleoside diphosphates. The polypeptide is Nucleoside triphosphate/diphosphate phosphatase (Streptococcus mutans serotype c (strain ATCC 700610 / UA159)).